The chain runs to 373 residues: Probable di-N-acetylchitobiase 1 (373 aa).

The first 20 residues, 1–20 (MKIFIIISLILTILIIQSKS), serve as a signal peptide directing secretion. One can recognise a GH18 domain in the interval 21-369 (KECPCSNVEL…SGMWGALNSF (349 aa)). N-linked (GlcNAc...) asparagine glycosylation occurs at N48. Chitin contacts are provided by residues 53–54 (PY) and 82–85 (NGVR). N-linked (GlcNAc...) asparagine glycosylation occurs at N99. E127 acts as the Proton donor in catalysis. Residues Y128 and 191–194 (MDYD) each bind chitin. N-linked (GlcNAc...) asparagine glycans are attached at residues N222, N250, N269, N279, and N288. W347 is a binding site for chitin.

It belongs to the glycosyl hydrolase 18 family.

The protein resides in the lysosome. Involved in the degradation of asparagine-linked glycoproteins. May hydrolyze of N-acetyl-beta-D-glucosamine (1-4)N-acetylglucosamine chitobiose core from the reducing end of the bond. The sequence is that of Probable di-N-acetylchitobiase 1 (ctbs1) from Dictyostelium discoideum (Social amoeba).